The following is a 655-amino-acid chain: p-hydroxybenzoic acid efflux pump subunit AaeB (655 aa).

11 consecutive transmembrane segments (helical) span residues 13-33 (FAVK…HFQL), 38-58 (WAVL…GGEP), 69-89 (LRII…ISMI), 93-113 (LLMI…SSLV), 121-141 (WGLS…EPLL), 152-172 (EIVI…PRSI), 370-390 (LFWL…IAVV), 407-427 (FIYG…VIIP), 431-451 (QSML…GIEV), 459-479 (MGAL…TFHF), and 482-502 (FLDS…VILL).

It belongs to the aromatic acid exporter ArAE (TC 2.A.85) family.

The protein localises to the cell inner membrane. In terms of biological role, forms an efflux pump with AaeA. Could function as a metabolic relief valve, allowing to eliminate certain compounds when they accumulate to high levels in the cell. The sequence is that of p-hydroxybenzoic acid efflux pump subunit AaeB from Salmonella dublin (strain CT_02021853).